A 376-amino-acid polypeptide reads, in one-letter code: Putative glutamate--cysteine ligase 2 (376 aa).

This sequence belongs to the glutamate--cysteine ligase type 2 family. YbdK subfamily.

It carries out the reaction L-cysteine + L-glutamate + ATP = gamma-L-glutamyl-L-cysteine + ADP + phosphate + H(+). In terms of biological role, ATP-dependent carboxylate-amine ligase which exhibits weak glutamate--cysteine ligase activity. This chain is Putative glutamate--cysteine ligase 2, found in Mycobacterium bovis (strain ATCC BAA-935 / AF2122/97).